The following is a 216-amino-acid chain: Adenylate kinase (216 aa).

11–16 serves as a coordination point for ATP; it reads GSGKGT. The interval 31–60 is NMP; it reads ATGDLFRKAIECGDELGDTVKSYMERGELV. AMP is bound by residues Thr-32, Arg-37, 58 to 60, 86 to 89, and Gln-93; these read ELV and GFPR. The segment at 127–163 is LID; sequence GRWVCRSCQSPYQSGCAEVTKGKCSRCQGELYQRPDD. An ATP-binding site is contributed by Arg-128. Residues Cys-131, Cys-134, Cys-150, and Cys-153 each contribute to the Zn(2+) site. AMP is bound by residues Arg-160 and Arg-171. Ala-199 is an ATP binding site.

It belongs to the adenylate kinase family. As to quaternary structure, monomer.

It is found in the cytoplasm. It carries out the reaction AMP + ATP = 2 ADP. Its pathway is purine metabolism; AMP biosynthesis via salvage pathway; AMP from ADP: step 1/1. Functionally, catalyzes the reversible transfer of the terminal phosphate group between ATP and AMP. Plays an important role in cellular energy homeostasis and in adenine nucleotide metabolism. This chain is Adenylate kinase, found in Dehalococcoides mccartyi (strain ATCC BAA-2100 / JCM 16839 / KCTC 5957 / BAV1).